A 187-amino-acid polypeptide reads, in one-letter code: UPF0301 protein KPN78578_33170 (187 aa).

Belongs to the UPF0301 (AlgH) family.

The protein is UPF0301 protein KPN78578_33170 of Klebsiella pneumoniae subsp. pneumoniae (strain ATCC 700721 / MGH 78578).